Consider the following 80-residue polypeptide: Secreted transmembrane peptide 3 (80 aa).

The N-terminal stretch at Met1 to Gly27 is a signal peptide. The interval Ile44–Ser80 is disordered. An SCOOP motif motif is present at residues Pro62–Ser80. The span at Pro70–Ser80 shows a compositional bias: basic residues.

This sequence belongs to the serine rich endogenous peptide (SCOOP) phytocytokine family. In terms of assembly, interacts with MIK2 (via extracellular leucine-rich repeat domain); this interaction triggers the formation of complex between MIK2 and the BAK1/SERK3 and SERK4 coreceptors, and subsequent BAK1 activation by phosphorylation. As to expression, mostly expressed in leaves, and, to a lower extent, in roots, stems, siliques, seeds and flowers.

Its subcellular location is the cell membrane. It is found in the secreted. The protein resides in the extracellular space. It localises to the apoplast. The protein localises to the endoplasmic reticulum. Its subcellular location is the golgi apparatus. Brassicaceae-specific phytocytokine (plant endogenous peptide released into the apoplast) perceived by MIK2 in a BAK1/SERK3 and SERK4 coreceptors-dependent manner, that modulates various physiological and antimicrobial processes including growth prevention and reactive oxygen species (ROS) response regulation. The polypeptide is Secreted transmembrane peptide 3 (Arabidopsis thaliana (Mouse-ear cress)).